Consider the following 312-residue polypeptide: Transcription initiation factor IIB-2 (312 aa).

The TFIIB-type zinc-finger motif lies at 2-34 (SDAFCSDCKRHTEVVFDHSAGDTVCSECGLVLE). The Zn(2+) site is built by Cys6, Cys9, Cys26, and Cys29. 2 repeat units span residues 115 to 192 (MADR…YIVK) and 216 to 290 (FCSN…DLYP).

The protein belongs to the TFIIB family. As to quaternary structure, associates with TFIID-IIA (DA complex) to form TFIID-IIA-IIB (DAB-complex) which is then recognized by polymerase II.

Its subcellular location is the nucleus. Functionally, general factor that plays a major role in the activation of eukaryotic genes transcribed by RNA polymerase II. This is Transcription initiation factor IIB-2 (TFIIB2) from Arabidopsis thaliana (Mouse-ear cress).